Consider the following 666-residue polypeptide: Collagen alpha-1(XXV) chain (666 aa).

A disordered region spans residues M1–G24. Topologically, residues M1 to S33 are cytoplasmic. Residues G11–R21 show a composition bias toward basic and acidic residues. The helical; Signal-anchor for type II membrane protein transmembrane segment at C34 to V54 threads the bilayer. Residues K55–K666 lie on the Extracellular side of the membrane. The interval L116–P168 is disordered. Positions P121–R164 constitute a Collagen-like 1 domain. Residues P140 to P151 show a composition bias toward pro residues. The segment at L181 to K188 is interaction with amyloid-beta peptide. Disordered stretches follow at residues G189 to I428 and L445 to K666. 7 Collagen-like domains span residues G192–S247, G249–S308, G311–P370, G373–A425, G455–K514, G529–M588, and G589–D648. Pro residues predominate over residues P196–P208. Over residues P230–K245 the composition is skewed to low complexity. Residues E280 to A290 show a composition bias toward basic and acidic residues. Low complexity predominate over residues L336 to P358. 2 stretches are compositionally biased toward basic and acidic residues: residues K361–D377 and S398–D407. Residues Q457 to Q466 show a composition bias toward low complexity. Residues G494–G503 are compositionally biased toward gly residues. A compositionally biased stretch (pro residues) spans I528–M543. Residues R615–E638 show a composition bias toward basic and acidic residues.

In terms of assembly, forms homodimers and homotrimers. Binds to the fibrillized forms of amyloid-beta protein 40 (beta-APP40) and amyloid-betad protein 42 (beta-APP42). Found associated with beta-APP42 more frequently than with beta-APP40. Post-translationally, undergoes proteolytic cleavage by furin protease to yield the soluble collagen-like Alzheimer amyloid plaque component. In terms of processing, glycosylated. Hydroxylated on proline and lysine residues. In terms of tissue distribution, expressed predominantly in neurons with low levels also detected in heart, testis and eye.

Its subcellular location is the membrane. Functionally, inhibits fibrillization of amyloid-beta peptide during the elongation phase. Has also been shown to assemble amyloid fibrils into protease-resistant aggregates. Binds heparin. The protein is Collagen alpha-1(XXV) chain of Mus musculus (Mouse).